The sequence spans 338 residues: MARIGSFLIILYLIYALTLCICDDDESNYGGDKGNLFPGFYRSSCPRAEEIVRSVVAKAVARETRMAASLMRLHFHDCFVQGCDGSLLLDTSGSIVTEKNSNPNSRSARGFEVVDEIKAALENECPNTVSCADALTLAARDSSVLTGGPSWMVPLGRRDSTSASLSGSNNNIPAPNNTFNTIVTRFNNQGLDLTDVVALSGSHTIGFSRCTSFRQRLYNQSGNGSPDRTLEQSYAANLRQRCPRSGGDQNLSELDINSAGRFDNSYFKNLIENMGLLNSDEVLFSSNEQSRELVKKYAEDQEEFFEQFAESMIKMGNISPLTGSSGEIRKNCRKINNS.

The signal sequence occupies residues 1–22; the sequence is MARIGSFLIILYLIYALTLCIC. 4 cysteine pairs are disulfide-bonded: Cys-45–Cys-125, Cys-78–Cys-83, Cys-131–Cys-332, and Cys-210–Cys-242. The active-site Proton acceptor is the His-76. Asp-77, Val-80, Gly-82, Asp-84, and Ser-86 together coordinate Ca(2+). Pro-173 serves as a coordination point for substrate. A glycan (N-linked (GlcNAc...) asparagine) is linked at Asn-176. His-203 is a heme b binding site. Position 204 (Thr-204) interacts with Ca(2+). Asn-219 and Asn-250 each carry an N-linked (GlcNAc...) asparagine glycan. Residues Asp-255, Ser-258, and Asp-263 each coordinate Ca(2+).

It belongs to the peroxidase family. Classical plant (class III) peroxidase subfamily. Heme b serves as cofactor. Requires Ca(2+) as cofactor.

It is found in the secreted. The enzyme catalyses 2 a phenolic donor + H2O2 = 2 a phenolic radical donor + 2 H2O. Functionally, removal of H(2)O(2), oxidation of toxic reductants, biosynthesis and degradation of lignin, suberization, auxin catabolism, response to environmental stresses such as wounding, pathogen attack and oxidative stress. These functions might be dependent on each isozyme/isoform in each plant tissue. This Arabidopsis thaliana (Mouse-ear cress) protein is Peroxidase 15 (PER15).